Consider the following 380-residue polypeptide: Carbamoyl phosphate synthase small chain (380 aa).

Residues Met-1–Phe-187 form a CPSase region. Residues Ser-55, Gly-236, and Gly-238 each coordinate L-glutamine. One can recognise a Glutamine amidotransferase type-1 domain in the interval Thr-188–Ala-380. The Nucleophile role is filled by Cys-264. Residues Phe-265, Gln-268, Asn-306, Gly-308, and Phe-309 each coordinate L-glutamine. Residues His-354 and Glu-356 contribute to the active site.

The protein belongs to the CarA family. As to quaternary structure, composed of two chains; the small (or glutamine) chain promotes the hydrolysis of glutamine to ammonia, which is used by the large (or ammonia) chain to synthesize carbamoyl phosphate. Tetramer of heterodimers (alpha,beta)4.

It catalyses the reaction hydrogencarbonate + L-glutamine + 2 ATP + H2O = carbamoyl phosphate + L-glutamate + 2 ADP + phosphate + 2 H(+). The enzyme catalyses L-glutamine + H2O = L-glutamate + NH4(+). Its pathway is amino-acid biosynthesis; L-arginine biosynthesis; carbamoyl phosphate from bicarbonate: step 1/1. The protein operates within pyrimidine metabolism; UMP biosynthesis via de novo pathway; (S)-dihydroorotate from bicarbonate: step 1/3. Small subunit of the glutamine-dependent carbamoyl phosphate synthetase (CPSase). CPSase catalyzes the formation of carbamoyl phosphate from the ammonia moiety of glutamine, carbonate, and phosphate donated by ATP, constituting the first step of 2 biosynthetic pathways, one leading to arginine and/or urea and the other to pyrimidine nucleotides. The small subunit (glutamine amidotransferase) binds and cleaves glutamine to supply the large subunit with the substrate ammonia. This Streptomyces avermitilis (strain ATCC 31267 / DSM 46492 / JCM 5070 / NBRC 14893 / NCIMB 12804 / NRRL 8165 / MA-4680) protein is Carbamoyl phosphate synthase small chain.